Reading from the N-terminus, the 216-residue chain is RNA pyrophosphohydrolase (216 aa).

Residues 6–149 (GFRPNVGIIL…KRDVYQLALT (144 aa)) enclose the Nudix hydrolase domain. The Nudix box signature appears at 38–59 (GGIKYGETPMQAMYRELHEETG).

It belongs to the Nudix hydrolase family. RppH subfamily. It depends on a divalent metal cation as a cofactor.

In terms of biological role, accelerates the degradation of transcripts by removing pyrophosphate from the 5'-end of triphosphorylated RNA, leading to a more labile monophosphorylated state that can stimulate subsequent ribonuclease cleavage. The sequence is that of RNA pyrophosphohydrolase from Burkholderia ambifaria (strain MC40-6).